We begin with the raw amino-acid sequence, 155 residues long: Vasotocin-neurophysin VT 2 (155 aa).

The signal sequence occupies residues M1–A20. C21 and C26 are disulfide-bonded. G29 carries the post-translational modification Glycine amide. 7 disulfide bridges follow: C42–C86, C45–C59, C53–C76, C60–C66, C93–C106, C100–C118, and C107–C112. A compositionally biased stretch (acidic residues) spans S119–A128. The interval S119–E139 is disordered.

It belongs to the vasopressin/oxytocin family.

It is found in the secreted. Its function is as follows. Vasotocin is an antidiuretic hormone. The polypeptide is Vasotocin-neurophysin VT 2 (Catostomus commersonii (White sucker)).